A 372-amino-acid chain; its full sequence is Protein RecA (372 aa).

77–84 (GPESSGKT) is an ATP binding site.

The protein belongs to the RecA family.

Its subcellular location is the cytoplasm. Can catalyze the hydrolysis of ATP in the presence of single-stranded DNA, the ATP-dependent uptake of single-stranded DNA by duplex DNA, and the ATP-dependent hybridization of homologous single-stranded DNAs. It interacts with LexA causing its activation and leading to its autocatalytic cleavage. In Corynebacterium diphtheriae (strain ATCC 700971 / NCTC 13129 / Biotype gravis), this protein is Protein RecA.